A 79-amino-acid chain; its full sequence is Conotoxin ArMSGL-0121 (79 aa).

The N-terminal stretch at 1–20 (MSRLGIMVLTLLLLVFIVTS) is a signal peptide. Residues 21-44 (HQDAGEKQATQRNAINFRWRRSFT) constitute a propeptide that is removed on maturation. Cystine bridges form between C52–C64, C56–C73, and C63–C77. L78 carries the leucine amide modification.

This sequence belongs to the conotoxin O3 superfamily. In terms of tissue distribution, expressed by the venom duct.

It localises to the secreted. The chain is Conotoxin ArMSGL-0121 from Conus arenatus (Sand-dusted cone).